Consider the following 183-residue polypeptide: Translation initiation factor IF-3 (183 aa).

Polar residues predominate over residues 1–13; it reads MKQPDRNQQQGAK. The interval 1–24 is disordered; that stretch reads MKQPDRNQQQGAKSNRPAINDEIR.

This sequence belongs to the IF-3 family. As to quaternary structure, monomer.

It is found in the cytoplasm. Its function is as follows. IF-3 binds to the 30S ribosomal subunit and shifts the equilibrium between 70S ribosomes and their 50S and 30S subunits in favor of the free subunits, thus enhancing the availability of 30S subunits on which protein synthesis initiation begins. In Acinetobacter baylyi (strain ATCC 33305 / BD413 / ADP1), this protein is Translation initiation factor IF-3.